Reading from the N-terminus, the 146-residue chain is MTLTKGSFTYSSGEEYRGEWKEGRRHGFGQLMFADGGTYLGHFENGLFNGFGVLTFSDGSRYEGEFAQGKFNGVGVFIRHDNMTFEGEFKNGRVDGLGLLTFPDGSHGIPRNEGLFENNKLLRREKCSAVVQRAQSASKSARSLTA.

MORN repeat units follow at residues 16-38 (YRGE…DGGT), 39-61 (YLGH…DGSR), 62-84 (YEGE…DNMT), and 85-107 (FEGE…DGSH).

Interacts with MYO3A. In terms of tissue distribution, retina.

It is found in the cytoplasm. Its subcellular location is the cell projection. The protein localises to the filopodium tip. The protein resides in the stereocilium. Plays a role in promoting axonal degeneration following neuronal injury by toxic insult or trauma. The sequence is that of MORN repeat-containing protein 4 (MORN4) from Bos taurus (Bovine).